The following is a 53-amino-acid chain: Ferredoxin B (53 aa).

The tract at residues 1-35 (GIDPNYRSLPVVKEEQGVKIYGTYEPPTKLGIWGT) is N-terminal extension. An N6-methyllysine modification is found at lysine 29. The 4Fe-4S ferredoxin-type 1 domain occupies 34-53 (GTIVGVDFDLCIADGSCINA). Positions 44 and 50 each coordinate [3Fe-4S] cluster.

[3Fe-4S] cluster is required as a cofactor. Requires [4Fe-4S] cluster as cofactor.

Ferredoxins are iron-sulfur proteins that transfer electrons in a wide variety of metabolic reactions. The sequence is that of Ferredoxin B from Sulfuracidifex metallicus (Sulfolobus metallicus).